We begin with the raw amino-acid sequence, 183 residues long: NAD(P)H-quinone oxidoreductase subunit I, chloroplastic (183 aa).

2 consecutive 4Fe-4S ferredoxin-type domains span residues 55-84 and 95-124; these read GRIH…VDWK and KSYS…MTEE. Cysteine 64, cysteine 67, cysteine 70, cysteine 74, cysteine 104, cysteine 107, cysteine 110, and cysteine 114 together coordinate [4Fe-4S] cluster.

The protein belongs to the complex I 23 kDa subunit family. As to quaternary structure, NDH is composed of at least 16 different subunits, 5 of which are encoded in the nucleus. [4Fe-4S] cluster is required as a cofactor.

It localises to the plastid. The protein localises to the chloroplast thylakoid membrane. It carries out the reaction a plastoquinone + NADH + (n+1) H(+)(in) = a plastoquinol + NAD(+) + n H(+)(out). It catalyses the reaction a plastoquinone + NADPH + (n+1) H(+)(in) = a plastoquinol + NADP(+) + n H(+)(out). Functionally, NDH shuttles electrons from NAD(P)H:plastoquinone, via FMN and iron-sulfur (Fe-S) centers, to quinones in the photosynthetic chain and possibly in a chloroplast respiratory chain. The immediate electron acceptor for the enzyme in this species is believed to be plastoquinone. Couples the redox reaction to proton translocation, and thus conserves the redox energy in a proton gradient. This is NAD(P)H-quinone oxidoreductase subunit I, chloroplastic from Anthoceros angustus (Hornwort).